The primary structure comprises 312 residues: Aspartate carbamoyltransferase catalytic subunit (312 aa).

Arginine 62 and threonine 63 together coordinate carbamoyl phosphate. Position 90 (lysine 90) interacts with L-aspartate. The carbamoyl phosphate site is built by arginine 112, histidine 140, and glutamine 143. 2 residues coordinate L-aspartate: arginine 173 and arginine 228. Carbamoyl phosphate is bound by residues glycine 269 and proline 270.

This sequence belongs to the aspartate/ornithine carbamoyltransferase superfamily. ATCase family. In terms of assembly, heterododecamer (2C3:3R2) of six catalytic PyrB chains organized as two trimers (C3), and six regulatory PyrI chains organized as three dimers (R2).

It catalyses the reaction carbamoyl phosphate + L-aspartate = N-carbamoyl-L-aspartate + phosphate + H(+). Its pathway is pyrimidine metabolism; UMP biosynthesis via de novo pathway; (S)-dihydroorotate from bicarbonate: step 2/3. In terms of biological role, catalyzes the condensation of carbamoyl phosphate and aspartate to form carbamoyl aspartate and inorganic phosphate, the committed step in the de novo pyrimidine nucleotide biosynthesis pathway. The chain is Aspartate carbamoyltransferase catalytic subunit from Deinococcus geothermalis (strain DSM 11300 / CIP 105573 / AG-3a).